The primary structure comprises 206 residues: Thymidylate kinase (206 aa).

11–18 is a binding site for ATP; that stretch reads GIDGAGKT.

It belongs to the thymidylate kinase family.

It carries out the reaction dTMP + ATP = dTDP + ADP. Its function is as follows. Phosphorylation of dTMP to form dTDP in both de novo and salvage pathways of dTTP synthesis. The sequence is that of Thymidylate kinase from Paraburkholderia xenovorans (strain LB400).